Consider the following 308-residue polypeptide: MKNSLYQRHIISISDLNREELEMVVKVAGDLKRTPRHELLKNKVVASCFFEASTRTRLSFETAVQRLGGTVIGFSDGGNTSLAKKGETLADSVQIITSYVDAYVMRHPQEGAARLASMFSNGKPVINGGDGSNQHPTQTLLDLFSIYETQGRLDGLKVAFVGDLKYGRTVHSLAQALSLFGCRFYFIAPEALAMPEYICEELDDKGIEYSLHTSIEEVVGELDILYMTRVQKERFDETEFKHMKSKFVLNVDTLKGAQDNLRILHPLPRVDEIAIEVDHTPYAYYFQQAENGVYAREALLALVLNETI.

2 residues coordinate carbamoyl phosphate: Arg55 and Thr56. Lys85 serves as a coordination point for L-aspartate. Residues Arg106, His135, and Gln138 each coordinate carbamoyl phosphate. Residues Arg168 and Arg229 each contribute to the L-aspartate site. 2 residues coordinate carbamoyl phosphate: Leu267 and Pro268.

The protein belongs to the aspartate/ornithine carbamoyltransferase superfamily. ATCase family. As to quaternary structure, heterododecamer (2C3:3R2) of six catalytic PyrB chains organized as two trimers (C3), and six regulatory PyrI chains organized as three dimers (R2).

The catalysed reaction is carbamoyl phosphate + L-aspartate = N-carbamoyl-L-aspartate + phosphate + H(+). Its pathway is pyrimidine metabolism; UMP biosynthesis via de novo pathway; (S)-dihydroorotate from bicarbonate: step 2/3. In terms of biological role, catalyzes the condensation of carbamoyl phosphate and aspartate to form carbamoyl aspartate and inorganic phosphate, the committed step in the de novo pyrimidine nucleotide biosynthesis pathway. The sequence is that of Aspartate carbamoyltransferase catalytic subunit from Laribacter hongkongensis (strain HLHK9).